Consider the following 1363-residue polypeptide: DNA-directed RNA polymerase subunit beta (1363 aa).

It belongs to the RNA polymerase beta chain family. As to quaternary structure, the RNAP catalytic core consists of 2 alpha, 1 beta, 1 beta' and 1 omega subunit. When a sigma factor is associated with the core the holoenzyme is formed, which can initiate transcription.

It carries out the reaction RNA(n) + a ribonucleoside 5'-triphosphate = RNA(n+1) + diphosphate. Its function is as follows. DNA-dependent RNA polymerase catalyzes the transcription of DNA into RNA using the four ribonucleoside triphosphates as substrates. This chain is DNA-directed RNA polymerase subunit beta, found in Neorickettsia risticii (Ehrlichia risticii).